The primary structure comprises 737 residues: Polyribonucleotide nucleotidyltransferase (737 aa).

Residues aspartate 489 and aspartate 495 each coordinate Mg(2+). The KH domain occupies 556–615; it reads PKIDTIKIDVDKIKIVIGKGGETIDKIIAETGVKIDIDEEGNVSIYSSDQDAINRAKEII. Positions 625–693 constitute an S1 motif domain; it reads DEVYRAKVVR…EKGRIDASMK (69 aa). The tract at residues 691–737 is disordered; sequence SMKALLPRPPKPEHDEKGEKSERPHRPRHQKDYKPKKEFTETPKDSE. Over residues 700-737 the composition is skewed to basic and acidic residues; it reads PKPEHDEKGEKSERPHRPRHQKDYKPKKEFTETPKDSE.

This sequence belongs to the polyribonucleotide nucleotidyltransferase family. It depends on Mg(2+) as a cofactor.

The protein resides in the cytoplasm. It carries out the reaction RNA(n+1) + phosphate = RNA(n) + a ribonucleoside 5'-diphosphate. Functionally, involved in mRNA degradation. Catalyzes the phosphorolysis of single-stranded polyribonucleotides processively in the 3'- to 5'-direction. This chain is Polyribonucleotide nucleotidyltransferase, found in Streptococcus pneumoniae serotype 2 (strain D39 / NCTC 7466).